The sequence spans 313 residues: Ribosomal RNA small subunit methyltransferase H (313 aa).

Residues Gly-35–His-37, Asp-55, Phe-79, Asp-101, and Gln-108 each bind S-adenosyl-L-methionine.

It belongs to the methyltransferase superfamily. RsmH family.

It localises to the cytoplasm. It carries out the reaction cytidine(1402) in 16S rRNA + S-adenosyl-L-methionine = N(4)-methylcytidine(1402) in 16S rRNA + S-adenosyl-L-homocysteine + H(+). Functionally, specifically methylates the N4 position of cytidine in position 1402 (C1402) of 16S rRNA. The sequence is that of Ribosomal RNA small subunit methyltransferase H from Escherichia coli O7:K1 (strain IAI39 / ExPEC).